We begin with the raw amino-acid sequence, 187 residues long: Guanylate kinase (187 aa).

Residue Ser-2 is modified to N-acetylserine. Residues 2-184 (SRPIVISGPS…AYKELKDFIF (183 aa)) enclose the Guanylate kinase-like domain. 9–16 (GPSGTGKS) contributes to the ATP binding site. GMP contacts are provided by residues Ser-35, 39–42 (RTPR), Tyr-51, Glu-70, 79–81 (YGS), and Asp-101. Position 149 is a phosphoserine (Ser-149). Tyr-157 bears the Phosphotyrosine mark.

It belongs to the guanylate kinase family. As to quaternary structure, monomer.

The enzyme catalyses GMP + ATP = GDP + ADP. Functionally, catalyzes the reversible transfer of the terminal phosphoryl group of ATP to the acceptor molecule GMP. Essential for recycling GMP and indirectly, cGMP. The chain is Guanylate kinase (GUK1) from Saccharomyces cerevisiae (strain ATCC 204508 / S288c) (Baker's yeast).